A 395-amino-acid polypeptide reads, in one-letter code: Terminal nucleotidyltransferase 5B (395 aa).

It belongs to the TENT family.

It is found in the cytoplasm. It localises to the nucleus. The catalysed reaction is RNA(n) + ATP = RNA(n)-3'-adenine ribonucleotide + diphosphate. Functionally, catalyzes the transfer of one adenosine molecule from an ATP to an mRNA poly(A) tail bearing a 3'-OH terminal group in an ATP hydrolysis-dependent manner and participates in cytoplasmic polyadenylation. May be involved in maintaining the translation efficiency of at least some genes through preventing degradation of their mRNAs. This chain is Terminal nucleotidyltransferase 5B, found in Xenopus tropicalis (Western clawed frog).